Consider the following 63-residue polypeptide: Protein DsrB (63 aa).

The protein belongs to the DsrB family.

The sequence is that of Protein DsrB from Yersinia pseudotuberculosis serotype O:1b (strain IP 31758).